Reading from the N-terminus, the 279-residue chain is MQLCGFEVGIDQPLFLIAGPCVIESQEMAIETAGQLKEITTALGINFIYKSSYDKANRSSNKTFRGFGMDEGLKILDEVRRQVGVPILTDVHTEAQVPHVAAVVDVLQTPAFLCRQTDFITACAQSGKPVNIKKGQFLAPGDMKQVVQKAKEANGGADTIMVCERGASFGYNTLISDMRGLAIMRETNCPVVFDATHSVQQPGGQGDKSGGQREFVPVLARAAVASGVAGVFMETHPDPAQALSDGPNAWPLSKMKALLEVLVDLDRVVKKAGFIEHTV.

It belongs to the KdsA family.

The protein resides in the cytoplasm. It catalyses the reaction D-arabinose 5-phosphate + phosphoenolpyruvate + H2O = 3-deoxy-alpha-D-manno-2-octulosonate-8-phosphate + phosphate. It functions in the pathway carbohydrate biosynthesis; 3-deoxy-D-manno-octulosonate biosynthesis; 3-deoxy-D-manno-octulosonate from D-ribulose 5-phosphate: step 2/3. The protein operates within bacterial outer membrane biogenesis; lipopolysaccharide biosynthesis. In Methylobacillus flagellatus (strain ATCC 51484 / DSM 6875 / VKM B-1610 / KT), this protein is 2-dehydro-3-deoxyphosphooctonate aldolase.